A 576-amino-acid polypeptide reads, in one-letter code: Rop guanine nucleotide exchange factor 13 (576 aa).

Residues 119–485 enclose the PRONE domain; that stretch reads KSCYFAYVTE…QLTQNPELAM (367 aa). The segment covering 557–570 has biased composition (polar residues); it reads KTTYLESLGTTRSP. Residues 557 to 576 are disordered; that stretch reads KTTYLESLGTTRSPTAGRYS.

As to quaternary structure, interacts with PRK6. As to expression, specifically expressed in mature flowers.

Its function is as follows. Guanine-nucleotide exchange factor (GEF) that acts as an activator of Rop (Rho of plants) GTPases by promoting the exchange of GDP for GTP. In Arabidopsis thaliana (Mouse-ear cress), this protein is Rop guanine nucleotide exchange factor 13.